The primary structure comprises 399 residues: MVFELIRPAPLTEQKRSRDGCIYLYRAMKFIGWLPPKQGVLRYVYLTWTLMTFVWCTTYLPLGFLGSYMTQIKSFSPGEFLTSLQVCINAYGSSVKVAITYSMLWRLIKAKNILDQLDLRCTAMEEREKIHLVVARSNHAFLIFTFVYCGYAGSTYLSSVLSGRPPWQLYNPFIDWHDGTLKLWVASTLEYMVMSGAVLQDQLSDSYPLIYTLILRAHLDMLRERIRRLRSDENLSEAESYEELVKCVMDHKLILRYCAIIKPVIQGTIFTQFLLIGLVLGFTLINVFFFSDIWTGIASFMFVITILLQTFPFCYTCNLIMEDCESLTHAIFQSNWVDASRRYKTTLLYFLQNVQQPIVFIAGGIFQISMSSNISVAKFAFSVITITKQMNIADKFKTD.

Over 1-45 (MVFELIRPAPLTEQKRSRDGCIYLYRAMKFIGWLPPKQGVLRYVY) the chain is Cytoplasmic. Residues 46-66 (LTWTLMTFVWCTTYLPLGFLG) traverse the membrane as a helical segment. Over 67-83 (SYMTQIKSFSPGEFLTS) the chain is Extracellular. Residues 84–104 (LQVCINAYGSSVKVAITYSML) traverse the membrane as a helical segment. Over 105-140 (WRLIKAKNILDQLDLRCTAMEEREKIHLVVARSNHA) the chain is Cytoplasmic. A helical transmembrane segment spans residues 141-161 (FLIFTFVYCGYAGSTYLSSVL). Residues 162 to 178 (SGRPPWQLYNPFIDWHD) lie on the Extracellular side of the membrane. A helical membrane pass occupies residues 179–199 (GTLKLWVASTLEYMVMSGAVL). Topologically, residues 200-268 (QDQLSDSYPL…AIIKPVIQGT (69 aa)) are cytoplasmic. A helical membrane pass occupies residues 269–289 (IFTQFLLIGLVLGFTLINVFF). Residues 290 to 292 (FSD) lie on the Extracellular side of the membrane. The chain crosses the membrane as a helical span at residues 293–313 (IWTGIASFMFVITILLQTFPF). Residues 314–356 (CYTCNLIMEDCESLTHAIFQSNWVDASRRYKTTLLYFLQNVQQ) lie on the Cytoplasmic side of the membrane. A helical membrane pass occupies residues 357–377 (PIVFIAGGIFQISMSSNISVA). Over 378 to 399 (KFAFSVITITKQMNIADKFKTD) the chain is Extracellular.

Belongs to the insect chemoreceptor superfamily. Heteromeric odorant receptor channel (TC 1.A.69) family. Or2a subfamily. Interacts with Orco. Complexes exist early in the endomembrane system in olfactory sensory neurons (OSNs), coupling these complexes to the conserved ciliary trafficking pathway. Expressed in olfactory sensory neurons in the antenna.

It is found in the cell membrane. Odorant receptor which mediates acceptance or avoidance behavior, depending on its substrates. The odorant receptor repertoire encodes a large collection of odor stimuli that vary widely in identity, intensity, and duration. May form a complex with Orco to form odorant-sensing units, providing sensitive and prolonged odorant signaling and calcium permeability. Involved in the behavioral responses to ethyl acetate and pentyl acetate. This is Odorant receptor 42b (Or42b) from Drosophila melanogaster (Fruit fly).